The sequence spans 452 residues: UDP-N-acetylmuramoylalanine--D-glutamate ligase (452 aa).

Gly115–Thr121 provides a ligand contact to ATP.

Belongs to the MurCDEF family.

Its subcellular location is the cytoplasm. The enzyme catalyses UDP-N-acetyl-alpha-D-muramoyl-L-alanine + D-glutamate + ATP = UDP-N-acetyl-alpha-D-muramoyl-L-alanyl-D-glutamate + ADP + phosphate + H(+). Its pathway is cell wall biogenesis; peptidoglycan biosynthesis. Its function is as follows. Cell wall formation. Catalyzes the addition of glutamate to the nucleotide precursor UDP-N-acetylmuramoyl-L-alanine (UMA). The protein is UDP-N-acetylmuramoylalanine--D-glutamate ligase of Geobacter metallireducens (strain ATCC 53774 / DSM 7210 / GS-15).